We begin with the raw amino-acid sequence, 445 residues long: Histidinol dehydrogenase (445 aa).

3 residues coordinate NAD(+): Y134, Q198, and N226. Residues T249, Q271, and H274 each contribute to the substrate site. Residues Q271 and H274 each coordinate Zn(2+). Residues E340 and H341 each act as proton acceptor in the active site. Residues H341, D374, E428, and H433 each contribute to the substrate site. D374 serves as a coordination point for Zn(2+). H433 serves as a coordination point for Zn(2+).

Belongs to the histidinol dehydrogenase family. The cofactor is Zn(2+).

The catalysed reaction is L-histidinol + 2 NAD(+) + H2O = L-histidine + 2 NADH + 3 H(+). The protein operates within amino-acid biosynthesis; L-histidine biosynthesis; L-histidine from 5-phospho-alpha-D-ribose 1-diphosphate: step 9/9. In terms of biological role, catalyzes the sequential NAD-dependent oxidations of L-histidinol to L-histidinaldehyde and then to L-histidine. The chain is Histidinol dehydrogenase from Nocardia farcinica (strain IFM 10152).